A 494-amino-acid chain; its full sequence is Ribonuclease H (494 aa).

2 disordered regions span residues asparagine 79–proline 148 and arginine 205–arginine 231. Polar residues-rich tracts occupy residues glycine 84 to alanine 100 and proline 131 to serine 143. An RNase H type-1 domain is found at serine 272–arginine 488. Positions 281, 325, 374, and 480 each coordinate Mg(2+).

It belongs to the RNase H family. Monomer. Mg(2+) is required as a cofactor.

The catalysed reaction is Endonucleolytic cleavage to 5'-phosphomonoester.. In terms of biological role, endonuclease that specifically degrades the RNA of RNA-DNA hybrids. This is Ribonuclease H (RNH1) from Crithidia fasciculata.